The sequence spans 117 residues: Prefoldin subunit beta (117 aa).

The protein belongs to the prefoldin subunit beta family. As to quaternary structure, heterohexamer of two alpha and four beta subunits.

The protein resides in the cytoplasm. Its function is as follows. Molecular chaperone capable of stabilizing a range of proteins. Seems to fulfill an ATP-independent, HSP70-like function in archaeal de novo protein folding. The polypeptide is Prefoldin subunit beta (Pyrococcus furiosus (strain ATCC 43587 / DSM 3638 / JCM 8422 / Vc1)).